Consider the following 151-residue polypeptide: Putative calcium-binding protein CML23 (151 aa).

4 EF-hand domains span residues 2–37 (VASD…SLGE), 39–74 (MPDE…MEAD), 84–119 (ETCR…LGTH), and 120–151 (LDVA…MMMA). Ca(2+) is bound by residues Asp15, Asp17, Asp19, Lys21, Glu26, Asp52, Asp54, Asp56, and Glu63. Ca(2+) contacts are provided by Asp133, Asn135, Asp137, and Glu144.

Functionally, potential calcium sensor. The protein is Putative calcium-binding protein CML23 (CML23) of Oryza sativa subsp. japonica (Rice).